The following is a 245-amino-acid chain: Orotidine 5'-phosphate decarboxylase (245 aa).

Residues Asp-22, Lys-44, 71–80 (DLKFHDIPNT), Thr-131, Arg-192, Gln-201, Gly-221, and Arg-222 contribute to the substrate site. Residue Lys-73 is the Proton donor of the active site.

The protein belongs to the OMP decarboxylase family. Type 1 subfamily. As to quaternary structure, homodimer.

It catalyses the reaction orotidine 5'-phosphate + H(+) = UMP + CO2. Its pathway is pyrimidine metabolism; UMP biosynthesis via de novo pathway; UMP from orotate: step 2/2. Its function is as follows. Catalyzes the decarboxylation of orotidine 5'-monophosphate (OMP) to uridine 5'-monophosphate (UMP). This Escherichia coli (strain 55989 / EAEC) protein is Orotidine 5'-phosphate decarboxylase.